Consider the following 199-residue polypeptide: RNA-free ribonuclease P (199 aa).

The protein belongs to the HARP family.

It carries out the reaction Endonucleolytic cleavage of RNA, removing 5'-extranucleotides from tRNA precursor.. Functionally, RNA-free RNase P that catalyzes the removal of the 5'-leader sequence from pre-tRNA to produce the mature 5'-terminus. The protein is RNA-free ribonuclease P of Pyrococcus furiosus (strain ATCC 43587 / DSM 3638 / JCM 8422 / Vc1).